A 443-amino-acid chain; its full sequence is UDP-N-acetylmuramate--L-alanine ligase (443 aa).

An ATP-binding site is contributed by 110 to 116 (GAHGKTS).

This sequence belongs to the MurCDEF family.

The protein resides in the cytoplasm. The catalysed reaction is UDP-N-acetyl-alpha-D-muramate + L-alanine + ATP = UDP-N-acetyl-alpha-D-muramoyl-L-alanine + ADP + phosphate + H(+). It functions in the pathway cell wall biogenesis; peptidoglycan biosynthesis. Cell wall formation. The chain is UDP-N-acetylmuramate--L-alanine ligase from Streptococcus agalactiae serotype III (strain NEM316).